A 278-amino-acid polypeptide reads, in one-letter code: Release factor glutamine methyltransferase (278 aa).

S-adenosyl-L-methionine-binding positions include 120–124, Asp-143, and Asn-184; that span reads GTGTG. 184–187 is a substrate binding site; the sequence is NPPY.

This sequence belongs to the protein N5-glutamine methyltransferase family. PrmC subfamily.

The enzyme catalyses L-glutaminyl-[peptide chain release factor] + S-adenosyl-L-methionine = N(5)-methyl-L-glutaminyl-[peptide chain release factor] + S-adenosyl-L-homocysteine + H(+). Functionally, methylates the class 1 translation termination release factors RF1/PrfA and RF2/PrfB on the glutamine residue of the universally conserved GGQ motif. The protein is Release factor glutamine methyltransferase of Deinococcus radiodurans (strain ATCC 13939 / DSM 20539 / JCM 16871 / CCUG 27074 / LMG 4051 / NBRC 15346 / NCIMB 9279 / VKM B-1422 / R1).